Reading from the N-terminus, the 558-residue chain is Glucose-6-phosphate isomerase (558 aa).

Ala2 bears the N-acetylalanine mark. Lys12 carries the post-translational modification N6-acetyllysine. Residue Lys34 is modified to N6-(2-hydroxyisobutyryl)lysine. A Phosphoserine modification is found at Ser107. Position 109 is a phosphothreonine (Thr109). The residue at position 142 (Lys142) is an N6-acetyllysine. Gly159 to Ser160 contacts D-glucose 6-phosphate. Ser185 carries the post-translational modification Phosphoserine; by CK2. Ser210–Thr215 serves as a coordination point for D-glucose 6-phosphate. Thr250 carries the post-translational modification Phosphothreonine. D-glucose 6-phosphate is bound by residues Gln354, Glu358, and His389. Glu358 (proton donor) is an active-site residue. His389 is an active-site residue. N6-acetyllysine; alternate is present on Lys454. Lys454 carries the post-translational modification N6-malonyllysine; alternate. Lys454 carries the post-translational modification N6-succinyllysine; alternate. Ser455 carries the post-translational modification Phosphoserine. D-glucose 6-phosphate is bound at residue Lys519. Residue Lys519 is part of the active site.

Belongs to the GPI family. In terms of assembly, homodimer in the catalytically active form, monomer in the secreted form. Post-translationally, phosphorylation at Ser-185 by CK2 has been shown to decrease enzymatic activity and may contribute to secretion by a non-classical secretory pathway. ISGylated.

It is found in the cytoplasm. The protein localises to the secreted. The catalysed reaction is alpha-D-glucose 6-phosphate = beta-D-fructose 6-phosphate. Its pathway is carbohydrate degradation; glycolysis; D-glyceraldehyde 3-phosphate and glycerone phosphate from D-glucose: step 2/4. In terms of biological role, in the cytoplasm, catalyzes the conversion of glucose-6-phosphate to fructose-6-phosphate, the second step in glycolysis, and the reverse reaction during gluconeogenesis. Besides it's role as a glycolytic enzyme, also acts as a secreted cytokine: acts as an angiogenic factor (AMF) that stimulates endothelial cell motility. Acts as a neurotrophic factor, neuroleukin, for spinal and sensory neurons. It is secreted by lectin-stimulated T-cells and induces immunoglobulin secretion. The polypeptide is Glucose-6-phosphate isomerase (Sus scrofa (Pig)).